A 449-amino-acid polypeptide reads, in one-letter code: Phosphoglucosamine mutase (449 aa).

Ser-101 functions as the Phosphoserine intermediate in the catalytic mechanism. Mg(2+) contacts are provided by Ser-101, Asp-242, Asp-244, and Asp-246. Phosphoserine is present on Ser-101.

This sequence belongs to the phosphohexose mutase family. Mg(2+) is required as a cofactor. In terms of processing, activated by phosphorylation.

The catalysed reaction is alpha-D-glucosamine 1-phosphate = D-glucosamine 6-phosphate. Its function is as follows. Catalyzes the conversion of glucosamine-6-phosphate to glucosamine-1-phosphate. The protein is Phosphoglucosamine mutase of Hyphomonas neptunium (strain ATCC 15444).